The following is a 218-amino-acid chain: OPA3-like protein (218 aa).

The stretch at 129-179 forms a coiled coil; sequence NEIMEKQFVLQKKKNELQSSTEEIDSTEKDFDELHKVILKVERELHTLRQN. The segment at 175–218 is disordered; that stretch reads TLRQNTPSQNEQAEATPSKEIPRETVSEKADHPPSSNTKSVSTG. Positions 176 to 189 are enriched in polar residues; it reads LRQNTPSQNEQAEA. The span at 194–206 shows a compositional bias: basic and acidic residues; sequence EIPRETVSEKADH. The segment covering 208–218 has biased composition (polar residues); the sequence is PSSNTKSVSTG.

It belongs to the OPA3 family.

The sequence is that of OPA3-like protein from Schizosaccharomyces pombe (strain 972 / ATCC 24843) (Fission yeast).